The following is a 38-amino-acid chain: Large ribosomal subunit protein bL36 (38 aa).

This sequence belongs to the bacterial ribosomal protein bL36 family.

The chain is Large ribosomal subunit protein bL36 from Ectopseudomonas mendocina (strain ymp) (Pseudomonas mendocina).